A 148-amino-acid polypeptide reads, in one-letter code: Transcriptional regulator MraZ (148 aa).

SpoVT-AbrB domains follow at residues 5-51 (VSIL…PEPN) and 80-123 (AETL…NAEE).

It belongs to the MraZ family. In terms of assembly, forms oligomers.

It is found in the cytoplasm. The protein localises to the nucleoid. The chain is Transcriptional regulator MraZ from Chromobacterium violaceum (strain ATCC 12472 / DSM 30191 / JCM 1249 / CCUG 213 / NBRC 12614 / NCIMB 9131 / NCTC 9757 / MK).